The following is a 337-amino-acid chain: 4-hydroxyproline 2-epimerase (337 aa).

Cys91 (proton acceptor) is an active-site residue. Residues Gly92–His93, Asp252, and Gly257–Thr258 each bind substrate.

Belongs to the proline racemase family.

It catalyses the reaction trans-4-hydroxy-L-proline = cis-4-hydroxy-D-proline. Functionally, catalyzes the epimerization of trans-4-hydroxy-L-proline (t4LHyp) to cis-4-hydroxy-D-proline (c4DHyp). Is likely involved in a degradation pathway that converts t4LHyp to alpha-ketoglutarate. Displays no proline racemase activity. This chain is 4-hydroxyproline 2-epimerase, found in Cereibacter sphaeroides (strain ATCC 17029 / ATH 2.4.9) (Rhodobacter sphaeroides).